The primary structure comprises 703 residues: Phosphoribosylformylglycinamidine synthase subunit PurL (703 aa).

The active site involves H36. Y39 and K80 together coordinate ATP. E82 contacts Mg(2+). Substrate contacts are provided by residues 83-86 (SHNH) and R105. The Proton acceptor role is filled by H84. D106 contacts Mg(2+). Residue Q226 coordinates substrate. Mg(2+) is bound at residue D252. A substrate-binding site is contributed by 294 to 296 (ETQ). D468 and G505 together coordinate ATP. S508 is a binding site for substrate.

The protein belongs to the FGAMS family. Monomer. Part of the FGAM synthase complex composed of 1 PurL, 1 PurQ and 2 PurS subunits.

The protein resides in the cytoplasm. It carries out the reaction N(2)-formyl-N(1)-(5-phospho-beta-D-ribosyl)glycinamide + L-glutamine + ATP + H2O = 2-formamido-N(1)-(5-O-phospho-beta-D-ribosyl)acetamidine + L-glutamate + ADP + phosphate + H(+). Its pathway is purine metabolism; IMP biosynthesis via de novo pathway; 5-amino-1-(5-phospho-D-ribosyl)imidazole from N(2)-formyl-N(1)-(5-phospho-D-ribosyl)glycinamide: step 1/2. Functionally, part of the phosphoribosylformylglycinamidine synthase complex involved in the purines biosynthetic pathway. Catalyzes the ATP-dependent conversion of formylglycinamide ribonucleotide (FGAR) and glutamine to yield formylglycinamidine ribonucleotide (FGAM) and glutamate. The FGAM synthase complex is composed of three subunits. PurQ produces an ammonia molecule by converting glutamine to glutamate. PurL transfers the ammonia molecule to FGAR to form FGAM in an ATP-dependent manner. PurS interacts with PurQ and PurL and is thought to assist in the transfer of the ammonia molecule from PurQ to PurL. The chain is Phosphoribosylformylglycinamidine synthase subunit PurL from Sulfurisphaera tokodaii (strain DSM 16993 / JCM 10545 / NBRC 100140 / 7) (Sulfolobus tokodaii).